A 1074-amino-acid chain; its full sequence is Phospholipase D1 (1074 aa).

Residues 81-212 (IKAQVLEVER…TEFLDVSQLS (132 aa)) enclose the PX domain. The 110-residue stretch at 219-328 (PKGLEGMIMK…WGGAIEEFIR (110 aa)) folds into the PH domain. 2 S-palmitoyl cysteine lipidation sites follow: Cys240 and Cys241. Positions 459–486 (YLWAHHEKLVIIDQSVAFVGGIDLAYGR) constitute a PLD phosphodiesterase 1 domain. The segment at 463–928 (HHEKLVIIDQ…MLGKRDSEMA (466 aa)) is catalytic. 3 positions are modified to phosphoserine: Ser499, Ser561, and Ser629. The PLD phosphodiesterase 2 domain maps to 891-918 (ELIYVHSKLLIADDNTVIIGSANINDRS).

It belongs to the phospholipase D family. Interacts with PIP5K1B. As to expression, expressed in kidney, lung, and at a much lower levels, in brain, liver, heart, testis and spleen.

It localises to the cytoplasm. The protein resides in the perinuclear region. Its subcellular location is the endoplasmic reticulum membrane. The protein localises to the golgi apparatus membrane. It is found in the late endosome membrane. It catalyses the reaction a 1,2-diacyl-sn-glycero-3-phosphocholine + H2O = a 1,2-diacyl-sn-glycero-3-phosphate + choline + H(+). The catalysed reaction is ethanol + a 1,2-diacyl-sn-glycero-3-phosphocholine = 1,2-diacyl-sn-glycero-3-phosphoethanol + choline. The enzyme catalyses 1,2-dihexadecanoyl-sn-glycero-3-phosphocholine + H2O = 1,2-dihexadecanoyl-sn-glycero-3-phosphate + choline + H(+). With respect to regulation, stimulated by phosphatidylinositol 4,5-bisphosphate and phosphatidylinositol 3,4,5-trisphosphate, activated by the phosphokinase C-alpha, by the ADP-ribosylation factor-1 (ARF-1), and to a lesser extent by GTP-binding proteins: RHO A, RAC-1 and CDC42. Inhibited by oleate. In terms of biological role, function as phospholipase selectivefor phosphatidylcholine. Implicated as a critical step in numerous cellular pathways, including signal transduction, membrane trafficking, and the regulation of mitosis. May be involved in the regulation of perinuclear intravesicular membrane traffic. The chain is Phospholipase D1 from Mus musculus (Mouse).